A 529-amino-acid polypeptide reads, in one-letter code: Cytochrome P450 monooxygenase acuD (529 aa).

Residues 8-28 (FAVIAASAAAVAGVLFLIYAA) traverse the membrane as a helical segment. N81 carries an N-linked (GlcNAc...) asparagine glycan. Residue C449 coordinates heme.

Belongs to the cytochrome P450 family. Heme serves as cofactor.

It is found in the endoplasmic reticulum membrane. The enzyme catalyses 3-hydroxybenzyl alcohol + reduced [NADPH--hemoprotein reductase] + O2 = gentisyl alcohol + oxidized [NADPH--hemoprotein reductase] + H2O + H(+). It functions in the pathway secondary metabolite biosynthesis. Its function is as follows. Cytochrome P450 monooxygenase; part of the gene cluster that mediates the biosynthesis of aculins. The pathway begins with the synthesis of 6-methylsalicylic acid by the polyketide synthase (PKS) acuA via condensation of acetate and malonate units. The 6-methylsalicylic acid decarboxylase acuB then catalyzes the decarboxylation of 6-methylsalicylic acid to yield m-cresol (also known as 3-methylphenol). These first reactions occur in the cytosol. The intermediate m-cresol is then transported into the endoplasmic reticulum where the cytochrome P450 monooxygenase acuC converts it to m-hydroxybenzyl alcohol, which is further converted to gentisyl alcohol by the cytochrome P450 monooxygenase acuD. Gentisyl alcohol is further oxidized by the oxidoreductase acuE that probably catalyzes hydroxylation of the aromatic ring. The aromatic system might then be opened by oxidation through a Baeyer-Villiger type of oxidation, which could be catalyzed by acuF, with the carboxylic acid at C-1 subsequently reduced to an aldehyde by acuG. Subsequently, a hemiacetal is formed, before the dehydrogenase acuH would reduce the double bond between C-4 and C-6. Finally, keto-enol tautomerism results in formation of aculinic acid, which exists as two diastereomers (both R/S configurations at C-1) by non-enzymatic hemiacetal formation. The carboxypeptidase acuI could be involved in the linking of aculinic acid to an aculene A moiety produced by the aculene biosynthesis cluster and which leads to the production of aculin A. AcuI may also be involved in the attachment of proline to aculinic acid to form epi-aculins A and B. The protein is Cytochrome P450 monooxygenase acuD of Aspergillus aculeatus (strain ATCC 16872 / CBS 172.66 / WB 5094).